The sequence spans 462 residues: U2 small nuclear ribonucleoprotein auxiliary factor 35 kDa subunit-related protein 2 (462 aa).

The span at 1 to 13 (METAGATADATAG) shows a compositional bias: low complexity. 3 disordered regions span residues 1-22 (METAGATADATAGPQKLSRKKY), 44-66 (AELAQKEEEEDPLAEEKRLEEER), and 115-138 (WEEQQRKEREEEEQKRQEKREREE). Lys-49 is covalently cross-linked (Glycyl lysine isopeptide (Lys-Gly) (interchain with G-Cter in SUMO2)). Residues 57–66 (AEEKRLEEER) show a composition bias toward basic and acidic residues. The C3H1-type 1 zinc-finger motif lies at 170-198 (EKDRANCPFYSKTGACRFGDRCSRKHNFP). An RRM domain is found at 202-308 (PTLLIKGMFT…RQLQCEFCPV (107 aa)). A C3H1-type 2 zinc finger spans residues 310 to 337 (RWKMAICGLFEVQQCPRGKHCNFLHVFR). A Phosphoserine modification is found at Ser-353. Positions 354 to 462 (PDWTSSSFGK…QPQPQPQSDP (109 aa)) are disordered. Residues 364–379 (NSERRERASHYDEYYG) are compositionally biased toward basic and acidic residues. Position 389 is a phosphoserine (Ser-389). Basic and acidic residues predominate over residues 392-403 (FYKRNGESDRKS). Residues 404–417 (SSRHRVKKSHRYGM) are compositionally biased toward basic residues.

As to quaternary structure, component of the U11/U12 snRNPs that are part of the U12-type spliceosome. Interacts (via RS domain) with SRSF1 and SRSF2. Interacts with U2AF2/U2AF65. Phosphorylated in the RS domain by SRPK1.

It is found in the nucleus. In terms of biological role, pre-mRNA-binding protein required for splicing of both U2- and U12-type introns. Selectively interacts with the 3'-splice site of U2- and U12-type pre-mRNAs and promotes different steps in U2 and U12 intron splicing. Recruited to U12 pre-mRNAs in an ATP-dependent manner and is required for assembly of the prespliceosome, a precursor to other spliceosomal complexes. For U2-type introns, it is selectively and specifically required for the second step of splicing. This chain is U2 small nuclear ribonucleoprotein auxiliary factor 35 kDa subunit-related protein 2 (Zrsr2), found in Mus musculus (Mouse).